Reading from the N-terminus, the 81-residue chain is ATP synthase subunit c, chloroplastic (81 aa).

Transmembrane regions (helical) follow at residues 3–23 and 57–77; these read PIIS…ASIG and LAFM…LLFA.

This sequence belongs to the ATPase C chain family. As to quaternary structure, F-type ATPases have 2 components, F(1) - the catalytic core - and F(0) - the membrane proton channel. F(1) has five subunits: alpha(3), beta(3), gamma(1), delta(1), epsilon(1). F(0) has four main subunits: a(1), b(1), b'(1) and c(10-14). The alpha and beta chains form an alternating ring which encloses part of the gamma chain. F(1) is attached to F(0) by a central stalk formed by the gamma and epsilon chains, while a peripheral stalk is formed by the delta, b and b' chains.

The protein localises to the plastid. The protein resides in the chloroplast thylakoid membrane. Its function is as follows. F(1)F(0) ATP synthase produces ATP from ADP in the presence of a proton or sodium gradient. F-type ATPases consist of two structural domains, F(1) containing the extramembraneous catalytic core and F(0) containing the membrane proton channel, linked together by a central stalk and a peripheral stalk. During catalysis, ATP synthesis in the catalytic domain of F(1) is coupled via a rotary mechanism of the central stalk subunits to proton translocation. Functionally, key component of the F(0) channel; it plays a direct role in translocation across the membrane. A homomeric c-ring of between 10-14 subunits forms the central stalk rotor element with the F(1) delta and epsilon subunits. This is ATP synthase subunit c, chloroplastic from Welwitschia mirabilis (Tree tumbo).